The chain runs to 72 residues: Translation initiation factor IF-1 (72 aa).

In terms of domain architecture, S1-like spans 1-72 (MSKEDSIEVT…TKGRITFRHR (72 aa)).

Belongs to the IF-1 family. As to quaternary structure, component of the 30S ribosomal translation pre-initiation complex which assembles on the 30S ribosome in the order IF-2 and IF-3, IF-1 and N-formylmethionyl-tRNA(fMet); mRNA recruitment can occur at any time during PIC assembly.

The protein resides in the cytoplasm. Its function is as follows. One of the essential components for the initiation of protein synthesis. Stabilizes the binding of IF-2 and IF-3 on the 30S subunit to which N-formylmethionyl-tRNA(fMet) subsequently binds. Helps modulate mRNA selection, yielding the 30S pre-initiation complex (PIC). Upon addition of the 50S ribosomal subunit IF-1, IF-2 and IF-3 are released leaving the mature 70S translation initiation complex. This chain is Translation initiation factor IF-1, found in Solibacter usitatus (strain Ellin6076).